A 283-amino-acid chain; its full sequence is Pantothenate synthetase (283 aa).

34 to 41 (MGALHDGH) is a binding site for ATP. Histidine 41 serves as the catalytic Proton donor. Glutamine 65 provides a ligand contact to (R)-pantoate. Glutamine 65 is a binding site for beta-alanine. An ATP-binding site is contributed by 152–155 (GQKD). (R)-pantoate is bound at residue glutamine 158. ATP-binding positions include valine 181 and 189-192 (MSSR).

It belongs to the pantothenate synthetase family. As to quaternary structure, homodimer.

The protein resides in the cytoplasm. The catalysed reaction is (R)-pantoate + beta-alanine + ATP = (R)-pantothenate + AMP + diphosphate + H(+). It participates in cofactor biosynthesis; (R)-pantothenate biosynthesis; (R)-pantothenate from (R)-pantoate and beta-alanine: step 1/1. In terms of biological role, catalyzes the condensation of pantoate with beta-alanine in an ATP-dependent reaction via a pantoyl-adenylate intermediate. In Nitrobacter hamburgensis (strain DSM 10229 / NCIMB 13809 / X14), this protein is Pantothenate synthetase.